Reading from the N-terminus, the 304-residue chain is Aspartate carbamoyltransferase catalytic subunit (304 aa).

2 residues coordinate carbamoyl phosphate: Arg-55 and Thr-56. Lys-83 contacts L-aspartate. Residues Arg-105, His-133, and Gln-136 each contribute to the carbamoyl phosphate site. L-aspartate-binding residues include Arg-166 and Arg-220. Carbamoyl phosphate contacts are provided by Gly-261 and Pro-262.

Belongs to the aspartate/ornithine carbamoyltransferase superfamily. ATCase family. Heterododecamer (2C3:3R2) of six catalytic PyrB chains organized as two trimers (C3), and six regulatory PyrI chains organized as three dimers (R2).

The catalysed reaction is carbamoyl phosphate + L-aspartate = N-carbamoyl-L-aspartate + phosphate + H(+). It functions in the pathway pyrimidine metabolism; UMP biosynthesis via de novo pathway; (S)-dihydroorotate from bicarbonate: step 2/3. Functionally, catalyzes the condensation of carbamoyl phosphate and aspartate to form carbamoyl aspartate and inorganic phosphate, the committed step in the de novo pyrimidine nucleotide biosynthesis pathway. This chain is Aspartate carbamoyltransferase catalytic subunit, found in Caldanaerobacter subterraneus subsp. tengcongensis (strain DSM 15242 / JCM 11007 / NBRC 100824 / MB4) (Thermoanaerobacter tengcongensis).